We begin with the raw amino-acid sequence, 364 residues long: Aminomethyltransferase (364 aa).

This sequence belongs to the GcvT family. The glycine cleavage system is composed of four proteins: P, T, L and H.

The enzyme catalyses N(6)-[(R)-S(8)-aminomethyldihydrolipoyl]-L-lysyl-[protein] + (6S)-5,6,7,8-tetrahydrofolate = N(6)-[(R)-dihydrolipoyl]-L-lysyl-[protein] + (6R)-5,10-methylene-5,6,7,8-tetrahydrofolate + NH4(+). Functionally, the glycine cleavage system catalyzes the degradation of glycine. This is Aminomethyltransferase from Shewanella sp. (strain ANA-3).